The sequence spans 442 residues: tRNA modification GTPase MnmE (442 aa).

Residues Arg23, Glu82, and Lys121 each contribute to the (6S)-5-formyl-5,6,7,8-tetrahydrofolate site. One can recognise a TrmE-type G domain in the interval 215 to 364 (GTSLILAGKP…VKQALIQWMQ (150 aa)). Position 225 (Asn225) interacts with K(+). GTP-binding positions include 225–230 (NVGKSS), 244–250 (THIPGTT), 269–272 (DTAG), and 325–328 (NKAD). Mg(2+) is bound at residue Ser229. Residues Thr244, Ile246, and Thr249 each contribute to the K(+) site. Residue Thr250 coordinates Mg(2+). Lys442 contacts (6S)-5-formyl-5,6,7,8-tetrahydrofolate.

It belongs to the TRAFAC class TrmE-Era-EngA-EngB-Septin-like GTPase superfamily. TrmE GTPase family. Homodimer. Heterotetramer of two MnmE and two MnmG subunits. The cofactor is K(+).

It localises to the cytoplasm. In terms of biological role, exhibits a very high intrinsic GTPase hydrolysis rate. Involved in the addition of a carboxymethylaminomethyl (cmnm) group at the wobble position (U34) of certain tRNAs, forming tRNA-cmnm(5)s(2)U34. The polypeptide is tRNA modification GTPase MnmE (Chlamydia pneumoniae (Chlamydophila pneumoniae)).